Consider the following 606-residue polypeptide: NADH-ubiquinone oxidoreductase chain 5 (606 aa).

Transmembrane regions (helical) follow at residues 1-21 (MNMF…PIIM), 43-63 (AFMI…ETIF), 87-107 (MIFV…SMWY), 117-137 (FFKY…ANNM), 140-160 (LFIG…WWYG), 171-191 (AVLY…WFLL), 201-221 (IFIT…LAAT), 241-261 (TPVS…FLLI), 273-293 (IQTL…ICAL), 310-330 (LGLM…LHIC), 365-385 (VLPF…GMPF), 409-429 (LLIT…IMFF), 457-477 (LLIG…PTTI), 488-508 (MTAL…NLTT), and 582-602 (GLIK…LLIL).

The protein belongs to the complex I subunit 5 family. Core subunit of respiratory chain NADH dehydrogenase (Complex I) which is composed of 45 different subunits.

Its subcellular location is the mitochondrion inner membrane. It carries out the reaction a ubiquinone + NADH + 5 H(+)(in) = a ubiquinol + NAD(+) + 4 H(+)(out). Core subunit of the mitochondrial membrane respiratory chain NADH dehydrogenase (Complex I) which catalyzes electron transfer from NADH through the respiratory chain, using ubiquinone as an electron acceptor. Essential for the catalytic activity and assembly of complex I. In Canis lupus familiaris (Dog), this protein is NADH-ubiquinone oxidoreductase chain 5 (MT-ND5).